The chain runs to 1165 residues: DNA-directed RNA polymerase III subunit RPC2 (1165 aa).

Residues 1 to 21 (MGVNTAGDPQKSQPKINKGGI) are disordered. Zn(2+)-binding residues include Cys-1111, Cys-1114, Cys-1123, and Cys-1126. A C4-type zinc finger spans residues 1111–1126 (CGQCGLLGYKGWCNSC).

It belongs to the RNA polymerase beta chain family. As to quaternary structure, component of the RNA polymerase III (Pol III) complex consisting of 17 subunits.

Its subcellular location is the nucleus. The catalysed reaction is RNA(n) + a ribonucleoside 5'-triphosphate = RNA(n+1) + diphosphate. Its function is as follows. DNA-dependent RNA polymerase catalyzes the transcription of DNA into RNA using the four ribonucleoside triphosphates as substrates. Second largest core component of RNA polymerase III which synthesizes small RNAs, such as 5S rRNA and tRNAs. Proposed to contribute to the polymerase catalytic activity and forms the polymerase active center together with the largest subunit. Pol III is composed of mobile elements and RPC2 is part of the core element with the central large cleft and probably a clamp element that moves to open and close the cleft. The chain is DNA-directed RNA polymerase III subunit RPC2 (rpc2) from Schizosaccharomyces pombe (strain 972 / ATCC 24843) (Fission yeast).